Consider the following 151-residue polypeptide: Large ribosomal subunit protein bL9 (151 aa).

Belongs to the bacterial ribosomal protein bL9 family.

Binds to the 23S rRNA. The polypeptide is Large ribosomal subunit protein bL9 (Lactobacillus johnsonii (strain CNCM I-12250 / La1 / NCC 533)).